The primary structure comprises 494 residues: GTPase Der (494 aa).

EngA-type G domains are found at residues Pro3–Glu166 and Ile207–Thr380. Residues Gly9–Ser16, Asp56–Ile60, Asn118–Asp121, Gly213–Ser220, Asp260–Val264, and Asn325–Asp328 each bind GTP. A KH-like domain is found at Lys381 to Glu465.

It belongs to the TRAFAC class TrmE-Era-EngA-EngB-Septin-like GTPase superfamily. EngA (Der) GTPase family. In terms of assembly, associates with the 50S ribosomal subunit.

GTPase that plays an essential role in the late steps of ribosome biogenesis. In Yersinia enterocolitica serotype O:8 / biotype 1B (strain NCTC 13174 / 8081), this protein is GTPase Der.